Here is a 147-residue protein sequence, read N- to C-terminus: Protein SOB FIVE-LIKE 2 (147 aa).

The SOFL-A motif lies at serine 18–tyrosine 23. The interval histidine 32–lysine 147 is disordered. The span at valine 37–methionine 77 shows a compositional bias: acidic residues. An SOFL-B motif is present at residues serine 76–proline 85. Residues threonine 78–serine 93 show a composition bias toward polar residues. Positions asparagine 96–lysine 106 are enriched in low complexity. The segment covering asparagine 114–alanine 131 has biased composition (basic and acidic residues).

Belongs to the SOFL plant protein family. In terms of tissue distribution, predominantly expressed in the vascular tissues of seedlings, developing leaves, flowers and siliques, but barely detectable in roots and stems.

It is found in the cytoplasm. Its subcellular location is the nucleus. Involved in cytokinin-mediated development. Together with SOFL2, triggers the endogenous content of specific bioactive cytokinins derived from the biosynthetic intermediates trans-zeatin riboside monophosphate (tZRMP) and N(6)-(Delta(2)-isopentenyl)adenosine monophosphate (iPRMP) such as N-glucosides trans-zeatin 7-glucoside (tZ7G), cis-zeatin 7-glucoside (cZ7G) and N(6)-(Delta(2)-isopentenyl)adenine 7-glucoside (iP7G). This chain is Protein SOB FIVE-LIKE 2, found in Arabidopsis thaliana (Mouse-ear cress).